Consider the following 287-residue polypeptide: MIQNEKKHLILYTGDVTKNLKSGIWNASRIKSNLELVKALENVKLTKFTGDGDENLKKNIKVLVPVNEKPQKLDGKQEEYEIIVKLFFLDGENIDIKKREETLSQVFYNLHMLFGIDFVSTLVVSFPHITFLKESGNSSSNEIYDSIDEIPPQEIQSWVDTWKLLEEKVGEGKIGTLGVSEFGVNELQRLISSVNVVPESTQINIGQNCKLPNDLLNFADRHHLKLFFHSDPSALLSESEITSVIHKACPEIPNPARVDWVIRYTILTRHTAVIHQKGYIVQSTYTE.

Belongs to the aldo/keto reductase family. Glutamate--cysteine ligase light chain subfamily. In terms of assembly, heterodimer of a catalytic heavy chain and a regulatory light chain.

The protein resides in the cytoplasm. Its pathway is sulfur metabolism; glutathione biosynthesis; glutathione from L-cysteine and L-glutamate: step 1/2. The protein is Putative glutamate--cysteine ligase regulatory subunit of Schizosaccharomyces pombe (strain 972 / ATCC 24843) (Fission yeast).